Here is a 529-residue protein sequence, read N- to C-terminus: Peptide chain release factor 3 (529 aa).

Positions 11–280 (NKRRTFAIIS…GLTEWAPKPQ (270 aa)) constitute a tr-type G domain. GTP is bound by residues 20–27 (SHPDAGKT), 88–92 (DTPGH), and 142–145 (NKLD).

It belongs to the TRAFAC class translation factor GTPase superfamily. Classic translation factor GTPase family. PrfC subfamily.

The protein localises to the cytoplasm. Functionally, increases the formation of ribosomal termination complexes and stimulates activities of RF-1 and RF-2. It binds guanine nucleotides and has strong preference for UGA stop codons. It may interact directly with the ribosome. The stimulation of RF-1 and RF-2 is significantly reduced by GTP and GDP, but not by GMP. This is Peptide chain release factor 3 from Mannheimia succiniciproducens (strain KCTC 0769BP / MBEL55E).